The sequence spans 416 residues: Gamma-glutamyl phosphate reductase (416 aa).

The protein belongs to the gamma-glutamyl phosphate reductase family.

It is found in the cytoplasm. The enzyme catalyses L-glutamate 5-semialdehyde + phosphate + NADP(+) = L-glutamyl 5-phosphate + NADPH + H(+). It functions in the pathway amino-acid biosynthesis; L-proline biosynthesis; L-glutamate 5-semialdehyde from L-glutamate: step 2/2. Its function is as follows. Catalyzes the NADPH-dependent reduction of L-glutamate 5-phosphate into L-glutamate 5-semialdehyde and phosphate. The product spontaneously undergoes cyclization to form 1-pyrroline-5-carboxylate. The chain is Gamma-glutamyl phosphate reductase from Streptococcus equi subsp. zooepidemicus (strain MGCS10565).